The following is a 421-amino-acid chain: MSDNGPQNQRSAPRITFGGPTDSTDNNQDGGRSGARPKQRRPQGLPNNTASWFTALTQHGKEELRFPRGQGVPINTNSGKDDQIGYYRRATRRVRGGDGKMKELSPRWYFYYLGTGPEASLPYGANKEGIVWVATEGALNTPKDHIGTRNPNNNAAIVLQLPQGTTLPKGFYAEGSRGGSQASSRSSSRSRGNSRNSTPGSSRGNSPARMASGGGETALALLLLDRLNQLESKVSGRSQQQQGQTVTKKSAAEASKKPRQKRTATKQYNVTQAFGRRGPEQTQGNFGDQELIRQGTDYKHWPQIAQFAPSASAFFGMSRIGMEVTPSGTWLTYHGAIKLDDKDPQFKDNVILLNKHIDAYKIFPPTEPKKDKKKKTDEAQPLPQRQKKQPTVTLLPAADMDDFSRQLQNSMSGASADSTQA.

Polar residues-rich tracts occupy residues 1-11 (MSDNGPQNQRS) and 21-30 (TDSTDNNQDG). The segment at 1–49 (MSDNGPQNQRSAPRITFGGPTDSTDNNQDGGRSGARPKQRRPQGLPNNT) is disordered. Positions 41 to 186 (RPQGLPNNTA…RGGSQASSRS (146 aa)) are RNA-binding. The 128-residue stretch at 48 to 175 (NTASWFTALT…TLPKGFYAEG (128 aa)) folds into the CoV N NTD domain. RNA is bound by residues Arg-92, Arg-107, and Arg-149. 3 disordered regions span residues 168-213 (PKGF…MASG), 233-268 (KVSG…TKQY), and 363-421 (FPPT…STQA). The residue at position 176 (Ser-176) is a Phosphoserine; by host. Positions 179–206 (GSQASSRSSSRSRGNSRNSTPGSSRGNS) are enriched in low complexity. The span at 233–248 (KVSGRSQQQQGQTVTK) shows a compositional bias: polar residues. One can recognise a CoV N CTD domain in the interval 247-364 (TKKSAAEASK…KHIDAYKIFP (118 aa)). Residues 258-361 (PRQKRTATKQ…LLNKHIDAYK (104 aa)) form a dimerization region. Residues 367-378 (EPKKDKKKKTDE) show a composition bias toward basic and acidic residues. A compositionally biased stretch (polar residues) spans 405–421 (RQLQNSMSGASADSTQA).

The protein belongs to the betacoronavirus nucleocapsid protein family. In terms of assembly, homooligomer. Both monomeric and oligomeric forms interact with RNA. Interacts with protein M. Interacts with NSP3; this interaction serves to tether the genome to the newly translated replicase-transcriptase complex at a very early stage of infection. ADP-ribosylated. The ADP-ribosylation is retained in the virion during infection. Post-translationally, phosphorylated on serine and threonine residues.

It localises to the virion. Its subcellular location is the host endoplasmic reticulum-Golgi intermediate compartment. The protein localises to the host Golgi apparatus. Its function is as follows. Packages the positive strand viral genome RNA into a helical ribonucleocapsid (RNP) and plays a fundamental role during virion assembly through its interactions with the viral genome and membrane protein M. Plays an important role in enhancing the efficiency of subgenomic viral RNA transcription as well as viral replication. The polypeptide is Nucleoprotein (Bat coronavirus Rp3/2004 (BtCoV/Rp3/2004)).